Here is a 384-residue protein sequence, read N- to C-terminus: 1-deoxy-D-xylulose 5-phosphate reductoisomerase (384 aa).

NADPH contacts are provided by Thr-10, Gly-11, Ser-12, Ile-13, Arg-37, Asn-38, and Asn-124. Lys-125 contributes to the 1-deoxy-D-xylulose 5-phosphate binding site. NADPH is bound at residue Glu-126. Residue Asp-150 participates in Mn(2+) binding. Residues Ser-151, Glu-152, Ser-176, and His-199 each coordinate 1-deoxy-D-xylulose 5-phosphate. Glu-152 is a Mn(2+) binding site. Gly-205 serves as a coordination point for NADPH. Positions 212, 217, 218, and 221 each coordinate 1-deoxy-D-xylulose 5-phosphate. Glu-221 is a Mn(2+) binding site.

It belongs to the DXR family. It depends on Mg(2+) as a cofactor. The cofactor is Mn(2+).

The enzyme catalyses 2-C-methyl-D-erythritol 4-phosphate + NADP(+) = 1-deoxy-D-xylulose 5-phosphate + NADPH + H(+). It participates in isoprenoid biosynthesis; isopentenyl diphosphate biosynthesis via DXP pathway; isopentenyl diphosphate from 1-deoxy-D-xylulose 5-phosphate: step 1/6. In terms of biological role, catalyzes the NADPH-dependent rearrangement and reduction of 1-deoxy-D-xylulose-5-phosphate (DXP) to 2-C-methyl-D-erythritol 4-phosphate (MEP). The sequence is that of 1-deoxy-D-xylulose 5-phosphate reductoisomerase from Clostridium perfringens (strain 13 / Type A).